The sequence spans 437 residues: Phosphomethylpyrimidine synthase (437 aa).

Substrate contacts are provided by residues Asn69, Met98, Tyr127, His163, 185–187, 226–229, and Glu265; these read SRG and DACR. His269 contacts Zn(2+). Residue Tyr292 coordinates substrate. Residue His333 coordinates Zn(2+). Residues Cys409, Cys412, and Cys416 each coordinate [4Fe-4S] cluster.

Belongs to the ThiC family. Requires [4Fe-4S] cluster as cofactor.

It carries out the reaction 5-amino-1-(5-phospho-beta-D-ribosyl)imidazole + S-adenosyl-L-methionine = 4-amino-2-methyl-5-(phosphooxymethyl)pyrimidine + CO + 5'-deoxyadenosine + formate + L-methionine + 3 H(+). It participates in cofactor biosynthesis; thiamine diphosphate biosynthesis. Functionally, catalyzes the synthesis of the hydroxymethylpyrimidine phosphate (HMP-P) moiety of thiamine from aminoimidazole ribotide (AIR) in a radical S-adenosyl-L-methionine (SAM)-dependent reaction. The sequence is that of Phosphomethylpyrimidine synthase from Clostridium kluyveri (strain NBRC 12016).